The chain runs to 256 residues: Major prion protein (256 aa).

An N-terminal signal peptide occupies residues 1-24 (MVKSHIGSWILVLFVAMWSDVGLC). The tract at residues 25 to 233 (KKRPKPGGGW…ESQAYYQRGA (209 aa)) is interaction with GRB2, ERI3 and SYN1. The disordered stretch occupies residues 28–110 (PKPGGGWNTG…QWNKPSKPKT (83 aa)). Repeat copies occupy residues 54–62 (PQGGGGWGQ), 63–70 (PHGGGWGQ), 71–78 (PHGGGWGQ), 79–86 (PHGGGWGQ), and 87–95 (PHGGGGWGQ). The segment at 54-95 (PQGGGGWGQPHGGGWGQPHGGGWGQPHGGGWGQPHGGGGWGQ) is 5 X 8 AA tandem repeats of P-H-G-G-G-W-G-Q. Gly residues predominate over residues 55-97 (QGGGGWGQPHGGGWGQPHGGGWGQPHGGGWGQPHGGGGWGQGG). Cu(2+) is bound by residues His-64, Gly-65, Gly-66, His-72, Gly-73, Gly-74, His-80, Gly-81, Gly-82, His-88, Gly-90, and Gly-91. Cys-182 and Cys-217 are oxidised to a cystine. 2 N-linked (GlcNAc...) asparagine glycosylation sites follow: Asn-184 and Asn-200. Ala-233 carries the GPI-anchor amidated alanine lipid modification. Positions 234–256 (SVILFSPPPVILLISFLIFLIVG) are cleaved as a propeptide — removed in mature form.

Belongs to the prion family. As to quaternary structure, monomer and homodimer. Has a tendency to aggregate into amyloid fibrils containing a cross-beta spine, formed by a steric zipper of superposed beta-strands. Soluble oligomers may represent an intermediate stage on the path to fibril formation. Copper binding may promote oligomerization. Interacts with GRB2, APP, ERI3/PRNPIP and SYN1. Mislocalized cytosolically exposed PrP interacts with MGRN1; this interaction alters MGRN1 subcellular location and causes lysosomal enlargement. Interacts with KIAA1191.

The protein localises to the cell membrane. It localises to the golgi apparatus. Its function is as follows. Its primary physiological function is unclear. Has cytoprotective activity against internal or environmental stresses. May play a role in neuronal development and synaptic plasticity. May be required for neuronal myelin sheath maintenance. May play a role in iron uptake and iron homeostasis. Soluble oligomers are toxic to cultured neuroblastoma cells and induce apoptosis (in vitro). Association with GPC1 (via its heparan sulfate chains) targets PRNP to lipid rafts. Also provides Cu(2+) or Zn(2+) for the ascorbate-mediated GPC1 deaminase degradation of its heparan sulfate side chains. This is Major prion protein (PRNP) from Capra hircus (Goat).